We begin with the raw amino-acid sequence, 1243 residues long: Serine/threonine-protein kinase WNK4 (1243 aa).

A compositionally biased stretch (polar residues) spans 1–17; the sequence is MLASPATETTVLMSQTE. The segment at 1–142 is disordered; it reads MLASPATETT…GPGSREPLRV (142 aa). A compositionally biased stretch (low complexity) spans 65-77; sequence VDLGLLSSWSLPA. Residues 78 to 103 are compositionally biased toward pro residues; sequence SPAPDPPDPPDSAGPGPARSPPPSSK. Phosphoserine is present on S97. Residues 118-127 are compositionally biased toward basic and acidic residues; that stretch reads AAEDSARPEL. Glycyl lysine isopeptide (Lys-Gly) (interchain with G-Cter in ubiquitin) cross-links involve residues K157 and K175. Residues 174–432 form the Protein kinase domain; it reads LKFDIEIGRG…IQDLLAHAFF (259 aa). S184 lines the ATP pocket. Residues K186, K226, and K241 each participate in a glycyl lysine isopeptide (Lys-Gly) (interchain with G-Cter in ubiquitin) cross-link. ATP-binding positions include 254 to 257 and K304; that span reads TELM. Residue D321 is the Proton acceptor of the active site. K328 participates in a covalent cross-link: Glycyl lysine isopeptide (Lys-Gly) (interchain with G-Cter in ubiquitin). S331 and S335 each carry phosphoserine; by autocatalysis. Residues K387, K393, K450, and K454 each participate in a glycyl lysine isopeptide (Lys-Gly) (interchain with G-Cter in ubiquitin) cross-link. The segment at 526 to 564 is disordered; it reads KARELEALPPEPGPPPATVPMAPGPPSVFPPEPEEPEAD. Positions 534 to 556 are enriched in pro residues; sequence PPEPGPPPATVPMAPGPPSVFPP. The interaction with KLHL3 stretch occupies residues 557-567; it reads EPEEPEADQHQ. The residue at position 575 (S575) is a Phosphoserine. Residues 630–641 show a composition bias toward low complexity; the sequence is SGPGSDFSPGDS. Disordered regions lie at residues 630–683, 751–871, and 943–1110; these read SGPG…SVSD, DTGP…STPE, and SPSP…SPVW. Residues 663 to 676 are compositionally biased toward basic residues; the sequence is PPGRNLRRRPRSRL. Positions 767 to 780 are enriched in pro residues; sequence EPAPLPALPVPLPD. The segment covering 797-812 has biased composition (low complexity); it reads WTAFSTSSSSPGTPLS. Positions 822–843 are enriched in pro residues; that stretch reads PISPGPIFPITSPPCHPSPSPF. Low complexity-rich tracts occupy residues 844–854, 862–871, and 943–952; these read SPISSQVSSNP, PLPFSSSTPE, and SPSPGLLSQS. The segment covering 953–970 has biased composition (pro residues); it reads PPAPPSPLPSLPLPPPVA. A Glycyl lysine isopeptide (Lys-Gly) (interchain with G-Cter in ubiquitin) cross-link involves residue K1010. The RFXV motif signature appears at 1016–1019; that stretch reads RFQV. S1035 is modified (phosphoserine). Residues 1065 to 1077 show a composition bias toward basic and acidic residues; the sequence is ETREALAESDRAA. Glycyl lysine isopeptide (Lys-Gly) (interchain with G-Cter in ubiquitin) cross-links involve residues K1144, K1157, and K1158. The tract at residues 1166-1243 is disordered; that stretch reads RLGKQPPPGI…VTFAGDVGRM (78 aa). Composition is skewed to polar residues over residues 1193 to 1204 and 1216 to 1228; these read SFPTSRRNSLQR and NSLSGSSTGSQEQ. The residue at position 1217 (S1217) is a Phosphoserine.

Belongs to the protein kinase superfamily. Ser/Thr protein kinase family. WNK subfamily. As to quaternary structure, interacts with the C-terminal region of KCNJ1. The cofactor is Mg(2+). Post-translationally, autophosphorylated at Ser-331 and Ser-335, promoting its activation. Phosphorylated by WNK1 and WNK3. Phosphorylated at Ser-575 in a MAP3K15/ASK3-dependent process in response to osmotic stress or hypotonic low-chloride stimulation. Ubiquitinated by the BCR(KLHL3) complex, leading to its degradation. Also ubiquitinated by the BCR(KLHL2) complex. Expressed in kidney, colon and skin.

The protein resides in the cell junction. It localises to the tight junction. The catalysed reaction is L-seryl-[protein] + ATP = O-phospho-L-seryl-[protein] + ADP + H(+). It carries out the reaction L-threonyl-[protein] + ATP = O-phospho-L-threonyl-[protein] + ADP + H(+). Activation requires autophosphorylation of Ser-331 and Ser-335. Autophosphorylation and subsequent activation is inhibited by increases in intracellular ionic strength: Cl(-) potently inhibits WNK4 kinase activity via direct binding. Also inhibited by K(+) ions. Functionally, serine/threonine-protein kinase component of the WNK4-SPAK/OSR1 kinase cascade, which acts as a key regulator of ion transport in the distal nephron and blood pressure. The WNK4-SPAK/OSR1 kinase cascade is composed of WNK4, which mediates phosphorylation and activation of downstream kinases OXSR1/OSR1 and STK39/SPAK. Following activation, OXSR1/OSR1 and STK39/SPAK catalyze phosphorylation of ion cotransporters, such as SLC12A1/NKCC2, SLC12A2/NKCC1, SLC12A3/NCC, SLC12A5/KCC2 or SLC12A6/KCC3, regulating their activity. Acts as a molecular switch that regulates the balance between renal salt reabsorption and K(+) secretion by modulating the activities of renal transporters and channels, including the Na-Cl cotransporter SLC12A3/NCC and the K(+) channel, KCNJ1/ROMK. Regulates NaCl reabsorption in the distal nephron by activating the thiazide-sensitive Na-Cl cotransporter SLC12A3/NCC in distal convoluted tubule cells of kidney: activates SLC12A3/NCC in a OXSR1/OSR1- and STK39/SPAK-dependent process. Also acts as a scaffold protein independently of its protein kinase activity: negatively regulates cell membrane localization of various transporters and channels (CFTR, KCNJ1/ROMK, SLC4A4, SLC26A9 and TRPV4) by clathrin-dependent endocytosis. Also inhibits the activity of the epithelial Na(+) channel (ENaC) SCNN1A, SCNN1B, SCNN1D in a inase-independent mechanism. May also phosphorylate NEDD4L. The chain is Serine/threonine-protein kinase WNK4 from Homo sapiens (Human).